We begin with the raw amino-acid sequence, 234 residues long: Ribonuclease Trv (234 aa).

Intrachain disulfides connect cysteine 5/cysteine 24, cysteine 13/cysteine 59, cysteine 23/cysteine 125, cysteine 67/cysteine 117, and cysteine 189/cysteine 224. An N-linked (GlcNAc...) asparagine glycan is attached at asparagine 15. Residue histidine 52 is part of the active site. N-linked (GlcNAc...) asparagine glycosylation is present at asparagine 75. Catalysis depends on residues glutamate 110 and histidine 114.

Belongs to the RNase T2 family.

It carries out the reaction a ribonucleotidyl-ribonucleotide-RNA + H2O = a 3'-end 3'-phospho-ribonucleotide-RNA + a 5'-end dephospho-ribonucleoside-RNA + H(+). This is a base non-specific and adenylic acid preferential ribonuclease. This is Ribonuclease Trv from Hypocrea rufa (Trichoderma viride).